Reading from the N-terminus, the 228-residue chain is FCS-Like Zinc finger 12 (228 aa).

The segment at 162–205 (DFLTSCCLCKKKLQGKDIYMYKGDEGFCSKECRSLKIMEDSLKE) adopts an FLZ-type zinc-finger fold.

This sequence belongs to the FLZ family. Interacts with KIN10 and KIN11 via its FLZ-type zinc finger domain. Interacts with KINB1 and KINB2 via its N-terminal part. Forms homodimer and heterodimer with FLZ2 and FLZ10 in vitro.

Functionally, may act as an adapter to facilitate the interaction of SnRK1 complex with effector proteins, conferring tissue- and stimulus-type specific differences in the SnRK1 regulation pathway. The sequence is that of FCS-Like Zinc finger 12 from Arabidopsis thaliana (Mouse-ear cress).